Here is a 157-residue protein sequence, read N- to C-terminus: SsrA-binding protein (157 aa).

Residues Leu-133–Gly-157 are disordered. The span at Asp-135 to Gly-157 shows a compositional bias: basic and acidic residues.

The protein belongs to the SmpB family.

Its subcellular location is the cytoplasm. Its function is as follows. Required for rescue of stalled ribosomes mediated by trans-translation. Binds to transfer-messenger RNA (tmRNA), required for stable association of tmRNA with ribosomes. tmRNA and SmpB together mimic tRNA shape, replacing the anticodon stem-loop with SmpB. tmRNA is encoded by the ssrA gene; the 2 termini fold to resemble tRNA(Ala) and it encodes a 'tag peptide', a short internal open reading frame. During trans-translation Ala-aminoacylated tmRNA acts like a tRNA, entering the A-site of stalled ribosomes, displacing the stalled mRNA. The ribosome then switches to translate the ORF on the tmRNA; the nascent peptide is terminated with the 'tag peptide' encoded by the tmRNA and targeted for degradation. The ribosome is freed to recommence translation, which seems to be the essential function of trans-translation. This is SsrA-binding protein from Methylobacterium sp. (strain 4-46).